Reading from the N-terminus, the 316-residue chain is Beta-ketoacyl-[acyl-carrier-protein] synthase III 4 (316 aa).

Catalysis depends on residues Cys114 and His242. The interval Gln243–Arg247 is ACP-binding. Residue Asn272 is part of the active site.

This sequence belongs to the thiolase-like superfamily. FabH family. In terms of assembly, homodimer.

The protein resides in the cytoplasm. It catalyses the reaction malonyl-[ACP] + acetyl-CoA + H(+) = 3-oxobutanoyl-[ACP] + CO2 + CoA. The protein operates within lipid metabolism; fatty acid biosynthesis. Functionally, catalyzes the condensation reaction of fatty acid synthesis by the addition to an acyl acceptor of two carbons from malonyl-ACP. Catalyzes the first condensation reaction which initiates fatty acid synthesis and may therefore play a role in governing the total rate of fatty acid production. Possesses both acetoacetyl-ACP synthase and acetyl transacylase activities. Its substrate specificity determines the biosynthesis of branched-chain and/or straight-chain of fatty acids. The protein is Beta-ketoacyl-[acyl-carrier-protein] synthase III 4 of Streptomyces coelicolor (strain ATCC BAA-471 / A3(2) / M145).